The primary structure comprises 214 residues: Adenylate kinase (214 aa).

10–15 lines the ATP pocket; sequence GAGKGT. Positions 30-59 are NMP; the sequence is STGDMLRAAIKAGTELGKQAKTLMDAGQLV. Residues T31, R36, 57–59, 85–88, and Q92 contribute to the AMP site; these read QLV and GFPR. Residues 122–159 form an LID region; sequence GRRVHPASGRSYHVVYNPPKVEGKDDVTGEDLIIRADD. ATP contacts are provided by residues R123 and 132–133; that span reads SY. 2 residues coordinate AMP: R156 and R167. An ATP-binding site is contributed by Q200.

It belongs to the adenylate kinase family. As to quaternary structure, monomer.

It localises to the cytoplasm. The enzyme catalyses AMP + ATP = 2 ADP. It participates in purine metabolism; AMP biosynthesis via salvage pathway; AMP from ADP: step 1/1. Catalyzes the reversible transfer of the terminal phosphate group between ATP and AMP. Plays an important role in cellular energy homeostasis and in adenine nucleotide metabolism. The polypeptide is Adenylate kinase (Actinobacillus succinogenes (strain ATCC 55618 / DSM 22257 / CCUG 43843 / 130Z)).